We begin with the raw amino-acid sequence, 213 residues long: MDPSWATQESEAVAEKVLRYRRDASGWKKCREGNGVSISWRPSEEFPGNLYRGEGILCGTPEEVWDCIKPVASGLREKWDDNVSSFEIVQSITDMLCVSRTSTPSAAMKLISPRDFVDLVLVKKYEDGTISSNATHVEHPLCPPKPGFVRGFNHPCGCFCEPLPGDPNKTNLVTFFQTDLSGYLPQSVVDSFFPRSMAEFYPNLQKAVRKFHH.

The START domain maps to 1-213 (MDPSWATQES…LQKAVRKFHH (213 aa)).

In terms of tissue distribution, expressed in most tissues, with highest levels in liver and in kidney.

Functionally, may be involved in the intracellular transport of sterols or other lipids. May bind cholesterol or other sterols. This is StAR-related lipid transfer protein 5 (Stard5) from Mus musculus (Mouse).